A 281-amino-acid polypeptide reads, in one-letter code: 1-acyl-sn-glycerol-3-phosphate acyltransferase (281 aa).

3 consecutive transmembrane segments (helical) span residues 40–60, 71–91, and 110–130; these read IFVCFAIVLITAVAWGLIMVL, LGNLYGHIIGGLVIWLYGIPI, and ASPIDAFFVMWLAPIGTVGVA. The HXXXXD motif signature appears at 109–114; the sequence is HASPID.

This sequence belongs to the 1-acyl-sn-glycerol-3-phosphate acyltransferase family.

It localises to the membrane. It catalyses the reaction a 1-acyl-sn-glycero-3-phosphate + an acyl-CoA = a 1,2-diacyl-sn-glycero-3-phosphate + CoA. It participates in phospholipid metabolism; CDP-diacylglycerol biosynthesis; CDP-diacylglycerol from sn-glycerol 3-phosphate: step 2/3. Converts lysophosphatidic acid (LPA) into phosphatidic acid by incorporating acyl moiety at the 2 position. This enzyme uses erucoyl-CoA as an acyl donor. The protein is 1-acyl-sn-glycerol-3-phosphate acyltransferase of Limnanthes alba (White meadowfoam).